Consider the following 538-residue polypeptide: Retinoblastoma-binding protein 5 (538 aa).

2 WD repeats span residues 22–63 and 64–103; these read DCIS…KIIS and AHIH…CDQR. A Glycyl lysine isopeptide (Lys-Gly) (interchain with G-Cter in SUMO2) cross-link involves residue K129. WD repeat units lie at residues 148 to 188, 196 to 235, 249 to 291, and 293 to 331; these read DDDS…LVAS, SNTT…TCGR, VNRT…KILH, and TRGE…NWSA. The residue at position 252 (T252) is a Phosphothreonine; by CDK1. The interaction with ASH2L stretch occupies residues 330 to 366; it reads SAFAPDFKELDENVEYEERESEFDIEDEDKSEPEQTG. Acidic residues predominate over residues 344-360; that stretch reads EYEERESEFDIEDEDKS. The interval 344 to 377 is disordered; it reads EYEERESEFDIEDEDKSEPEQTGADAAEDEEVDV. Position 350 is a phosphoserine (S350). Residues 371–380 form an interaction with WDR5 region; that stretch reads EDEEVDVTSV. Phosphoserine occurs at positions 388 and 389. Positions 408 to 538 are disordered; the sequence is VEDPEENPYG…TAGGAISELL (131 aa). Basic residues predominate over residues 479 to 490; that stretch reads SKKKQAGRPKGS. The span at 491–510 shows a compositional bias: basic and acidic residues; it reads KGKEKDSPFKPKLYKGDRGL. A Phosphoserine; by CDK1 modification is found at S497. S525 carries the phosphoserine modification.

Component of the SET1 complex, at least composed of the catalytic subunit (SETD1A or SETD1B), WDR5, WDR82, RBBP5, ASH2L/ASH2, CXXC1/CFP1, HCFC1 and DPY30. Core component of several methyltransferase-containing complexes including MLL1/MLL, MLL2/3 (also named ASCOM complex) and MLL4/WBP7. Each complex is at least composed of ASH2L, RBBP5, WDR5, DPY30, one or more specific histone methyltransferases (KMT2A/MLL1, KMT2D/MLL2, KMT2C/MLL3 and KMT2B/MLL4), and the facultative components PAGR1, BACC1, CHD8, E2F6, HCFC1, HCFC2, HSP70, INO80C, KDM6A, KANSL1, LAS1L, MAX, MCRS1, MEN1, MGA, MYST1/MOF, NCOA6, PAXIP1/PTIP, PELP1, PHF20, PRP31, RING2, RUVB1/TIP49A, RUVB2/TIP49B, SENP3, TAF1, TAF4, TAF6, TAF7, TAF9, TEX10 and alpha- and beta-tubulin. Component of a histone methylation complex composed of at least ZNF335, RBBP5, ASH2L and WDR5; the complex may have histone H3-specific methyltransferase activity, however does not have specificity for 'Lys-4' of histone H3. Interacts with ZNF335. Interacts with ASH2L; the interaction is direct. Interacts with WDR5; the interaction is direct. Components of the ZNF335-RBBP5-ASH2L-WDR5 histone methylation complex may associate with components of a nuclear receptor-mediated transcription complex to form a complex at least composed of ZNF335, HCFC1, CCAR2, EMSY, MKI67, RBBP5, ASH2L and WDR5. Within this complex interacts with EMSY. Found in a complex with RBBP5, ASH2L, DPY30, KMT2A, KMT2D and WDR5. Interacts with SETD1A. Interacts with WDR82. As to expression, ubiquitously expressed.

The protein resides in the nucleus. In terms of biological role, in embryonic stem (ES) cells, plays a crucial role in the differentiation potential, particularly along the neural lineage, regulating gene induction and H3 'Lys-4' methylation at key developmental loci, including that mediated by retinoic acid. Does not affect ES cell self-renewal. Component or associated component of some histone methyltransferase complexes which regulates transcription through recruitment of those complexes to gene promoters. As part of the MLL1/MLL complex, involved in mono-, di- and trimethylation at 'Lys-4' of histone H3. Histone H3 'Lys-4' methylation represents a specific tag for epigenetic transcriptional activation. In association with ASH2L and WDR5, stimulates the histone methyltransferase activities of KMT2A, KMT2B, KMT2C, KMT2D, SETD1A and SETD1B. This Homo sapiens (Human) protein is Retinoblastoma-binding protein 5 (RBBP5).